Consider the following 170-residue polypeptide: MITAVYPGTFDPLTRGHEDLVRRAAALFDKVVVGIAHSRNKKPFFSIDERVEIAREVLGHYPNVEVRSFAGLLKDFVREQNGRVIVRGLRAVSDFEYEFQMAGMNRHLLPEVETMFMTPSDQYQFISGTIVREIAQLGGDVSKFVFPSVERWLQAKAKEYREQSWPAGKG.

Substrate is bound at residue T9. ATP contacts are provided by residues 9–10 (TF) and H17. Positions 41, 73, and 87 each coordinate substrate. Residues 88-90 (GLR), E98, and 123-129 (YQFISGT) each bind ATP.

The protein belongs to the bacterial CoaD family. As to quaternary structure, homohexamer. It depends on Mg(2+) as a cofactor.

Its subcellular location is the cytoplasm. The catalysed reaction is (R)-4'-phosphopantetheine + ATP + H(+) = 3'-dephospho-CoA + diphosphate. It functions in the pathway cofactor biosynthesis; coenzyme A biosynthesis; CoA from (R)-pantothenate: step 4/5. Reversibly transfers an adenylyl group from ATP to 4'-phosphopantetheine, yielding dephospho-CoA (dPCoA) and pyrophosphate. This is Phosphopantetheine adenylyltransferase from Bordetella petrii (strain ATCC BAA-461 / DSM 12804 / CCUG 43448).